The primary structure comprises 152 residues: Deoxyuridine 5'-triphosphate nucleotidohydrolase (152 aa).

Residues 71–73 (RSG), N84, 88–90 (LID), and M98 contribute to the substrate site.

It belongs to the dUTPase family. The cofactor is Mg(2+).

The enzyme catalyses dUTP + H2O = dUMP + diphosphate + H(+). The protein operates within pyrimidine metabolism; dUMP biosynthesis; dUMP from dCTP (dUTP route): step 2/2. Functionally, this enzyme is involved in nucleotide metabolism: it produces dUMP, the immediate precursor of thymidine nucleotides and it decreases the intracellular concentration of dUTP so that uracil cannot be incorporated into DNA. This is Deoxyuridine 5'-triphosphate nucleotidohydrolase from Hahella chejuensis (strain KCTC 2396).